Consider the following 132-residue polypeptide: Ribosome-binding factor A (132 aa).

This sequence belongs to the RbfA family. As to quaternary structure, monomer. Binds 30S ribosomal subunits, but not 50S ribosomal subunits or 70S ribosomes.

The protein resides in the cytoplasm. Functionally, one of several proteins that assist in the late maturation steps of the functional core of the 30S ribosomal subunit. Associates with free 30S ribosomal subunits (but not with 30S subunits that are part of 70S ribosomes or polysomes). Required for efficient processing of 16S rRNA. May interact with the 5'-terminal helix region of 16S rRNA. The polypeptide is Ribosome-binding factor A (Prochlorococcus marinus subsp. pastoris (strain CCMP1986 / NIES-2087 / MED4)).